A 241-amino-acid polypeptide reads, in one-letter code: Enterotoxin type H (241 aa).

Residues 1 to 24 (MINKIKILFSFLALLLSFTSYAKA) form the signal peptide. A disulfide bridge connects residues Cys-106 and Cys-116. 3 residues coordinate Zn(2+): Asp-191, His-230, and Asp-232.

It belongs to the staphylococcal/streptococcal toxin family. In terms of assembly, interacts with host MHC class II molecules composed of alpha/HLA-DRA and beta/HLA-DRB1 chains. Interacts with host TCR alpha-chain TRAV27. It depends on Zn(2+) as a cofactor.

It localises to the secreted. Staphylococcal enterotoxin that activates the host immune system by binding as unprocessed molecules to major histocompatibility (MHC) complex class II and T-cell receptor (TCR) molecules via their alpha domain, in particular TRAV27. In turn, this ternary complex activates a large number of T-lymphocytes initiating a systemic release of pro-inflammatory cytokines. Also causes the intoxication staphylococcal food poisoning syndrome. The illness characterized by high fever, hypotension, diarrhea, shock, and in some cases death. The chain is Enterotoxin type H (entH) from Staphylococcus aureus.